A 334-amino-acid chain; its full sequence is Glyceraldehyde-3-phosphate dehydrogenase (334 aa).

Residues 12–13 (TI) and Gly-111 contribute to the NAD(+) site. 140 to 142 (SCN) provides a ligand contact to D-glyceraldehyde 3-phosphate. Cys-141 (nucleophile) is an active-site residue. Arg-167 provides a ligand contact to NAD(+). 192 to 193 (HG) serves as a coordination point for D-glyceraldehyde 3-phosphate. Gln-298 is a binding site for NAD(+).

The protein belongs to the glyceraldehyde-3-phosphate dehydrogenase family. As to quaternary structure, homotetramer.

The protein localises to the encapsulin nanocompartment. It catalyses the reaction D-glyceraldehyde 3-phosphate + phosphate + NADP(+) = (2R)-3-phospho-glyceroyl phosphate + NADPH + H(+). It carries out the reaction D-glyceraldehyde 3-phosphate + phosphate + NAD(+) = (2R)-3-phospho-glyceroyl phosphate + NADH + H(+). It participates in carbohydrate degradation; glycolysis; pyruvate from D-glyceraldehyde 3-phosphate: step 1/5. Possible cargo protein of a type 4B encapsulin nanocompartment. Active in the presence of NAD and NADP, prefers NADP. In Pyrococcus furiosus (strain ATCC 43587 / DSM 3638 / JCM 8422 / Vc1), this protein is Glyceraldehyde-3-phosphate dehydrogenase (gap).